The following is a 156-amino-acid chain: Arginine repressor (156 aa).

This sequence belongs to the ArgR family.

Its subcellular location is the cytoplasm. It participates in amino-acid biosynthesis; L-arginine biosynthesis [regulation]. Regulates arginine biosynthesis genes. In Sodalis glossinidius (strain morsitans), this protein is Arginine repressor.